We begin with the raw amino-acid sequence, 84 residues long: Large ribosomal subunit protein bL27 (84 aa).

Residues 1–29 (MAHKKGGGSTKNGRDSNPKYLGIKASGGS) form a disordered region.

It belongs to the bacterial ribosomal protein bL27 family.

The protein is Large ribosomal subunit protein bL27 of Chlorobium phaeobacteroides (strain BS1).